The primary structure comprises 261 residues: uncharacterized protein (261 aa).

This is an uncharacterized protein from Saccharomyces cerevisiae (strain ATCC 204508 / S288c) (Baker's yeast).